Consider the following 510-residue polypeptide: 2,3-bisphosphoglycerate-independent phosphoglycerate mutase (510 aa).

The Mn(2+) site is built by aspartate 14 and serine 64. Catalysis depends on serine 64, which acts as the Phosphoserine intermediate. Residues histidine 125, 155–156 (RD), arginine 187, arginine 193, 259–262 (RADR), and lysine 332 contribute to the substrate site. The Mn(2+) site is built by aspartate 399, histidine 403, aspartate 440, histidine 441, and histidine 459.

It belongs to the BPG-independent phosphoglycerate mutase family. As to quaternary structure, monomer. Mn(2+) is required as a cofactor.

It carries out the reaction (2R)-2-phosphoglycerate = (2R)-3-phosphoglycerate. It functions in the pathway carbohydrate degradation; glycolysis; pyruvate from D-glyceraldehyde 3-phosphate: step 3/5. In terms of biological role, catalyzes the interconversion of 2-phosphoglycerate and 3-phosphoglycerate. This is 2,3-bisphosphoglycerate-independent phosphoglycerate mutase from Pseudomonas syringae pv. syringae (strain B728a).